The chain runs to 343 residues: Glyceraldehyde-3-phosphate dehydrogenase (343 aa).

NAD(+)-binding positions include 11-12 and Gly110; that span reads TI. Residue 139–141 participates in D-glyceraldehyde 3-phosphate binding; sequence SCN. The Nucleophile role is filled by Cys140. Arg168 lines the NAD(+) pocket. A D-glyceraldehyde 3-phosphate-binding site is contributed by 194–195; that stretch reads HG. Gln301 provides a ligand contact to NAD(+).

This sequence belongs to the glyceraldehyde-3-phosphate dehydrogenase family. Homotetramer.

The protein localises to the cytoplasm. The enzyme catalyses D-glyceraldehyde 3-phosphate + phosphate + NADP(+) = (2R)-3-phospho-glyceroyl phosphate + NADPH + H(+). It carries out the reaction D-glyceraldehyde 3-phosphate + phosphate + NAD(+) = (2R)-3-phospho-glyceroyl phosphate + NADH + H(+). The protein operates within carbohydrate degradation; glycolysis; pyruvate from D-glyceraldehyde 3-phosphate: step 1/5. The protein is Glyceraldehyde-3-phosphate dehydrogenase of Methanoregula boonei (strain DSM 21154 / JCM 14090 / 6A8).